The chain runs to 404 residues: MNKILKNIINKSSINNVFKTSFNGGISSSSSSSSSYLNNNNNIIKSYNVQQKQQQRYYSSFEDDLSPKKLKEKILENETEEIRDFVRSQRLTKKTASPLEGMNRKERRKMTTKLYRNPDNLIRGGIVSPQPLIPAHIKKPKYVLGEPVIDFEIDDPIEIHTAESIEHMRVVGKMAKEVLEYAGTLVRPGITTDEIDKLVHQNIIDRGAYPSPLGYKGFPKSICTSINEVLCHGIPDDRPLEFGDIVKIDVTLYYNGYHGDTCATFPVGEIDSSSKRLIEATEKALYAAIGEVKDGALFNKIGKKIQLVANKYSLSVTPEFTGHGIGQLFHTAPFVFQCANEFDSVMKEGMIFTIEPVLVESTSPYAEWKMWDDKWTVSSREGGWSAQFEHTILVTKDGYEILTK.

The transit peptide at 1-58 (MNKILKNIINKSSINNVFKTSFNGGISSSSSSSSSYLNNNNNIIKSYNVQQKQQQRYY) directs the protein to the mitochondrion. Positions 86–109 (VRSQRLTKKTASPLEGMNRKERRK) are disordered. A substrate-binding site is contributed by H232. Residues D249, D260, and H323 each contribute to the a divalent metal cation site. H330 lines the substrate pocket. Residues E355 and E389 each contribute to the a divalent metal cation site.

This sequence belongs to the peptidase M24A family. Methionine aminopeptidase type 1 subfamily. The cofactor is Co(2+). Requires Zn(2+) as cofactor. Mn(2+) is required as a cofactor. It depends on Fe(2+) as a cofactor.

The protein localises to the mitochondrion. The enzyme catalyses Release of N-terminal amino acids, preferentially methionine, from peptides and arylamides.. In terms of biological role, removes the N-terminal methionine from nascent proteins. The N-terminal methionine is often cleaved when the second residue in the primary sequence is small and uncharged (Met-Ala-, Cys, Gly, Pro, Ser, Thr, or Val). This chain is Methionine aminopeptidase 1D, mitochondrial (metap1d), found in Dictyostelium discoideum (Social amoeba).